We begin with the raw amino-acid sequence, 152 residues long: Transcriptional regulator MraZ (152 aa).

2 SpoVT-AbrB domains span residues 5–52 (ATLV…PLPA) and 81–124 (ASEC…DEQT).

It belongs to the MraZ family. In terms of assembly, forms oligomers.

The protein resides in the cytoplasm. It is found in the nucleoid. In terms of biological role, negatively regulates its own expression and that of the subsequent genes in the proximal part of the division and cell wall (dcw) gene cluster. Acts by binding directly to DNA. May also regulate the expression of genes outside the dcw cluster. This is Transcriptional regulator MraZ from Sodalis glossinidius (strain morsitans).